A 176-amino-acid chain; its full sequence is Mitochondrial inner membrane protein Mpv17 (176 aa).

Transmembrane regions (helical) follow at residues valine 18–valine 38, threonine 53–leucine 73, glycine 94–leucine 114, and leucine 131–leucine 151.

Belongs to the peroxisomal membrane protein PXMP2/4 family. As to expression, ubiquitous. Expressed in pancreas, kidney, muscle, liver, lung, placenta, brain and heart.

The protein localises to the mitochondrion inner membrane. In terms of biological role, non-selective channel that modulates the membrane potential under normal conditions and oxidative stress, and is involved in mitochondrial homeostasis. Involved in mitochondrial deoxynucleoside triphosphates (dNTP) pool homeostasis and mitochondrial DNA (mtDNA) maintenance. May be involved in the regulation of reactive oxygen species metabolism and the control of oxidative phosphorylation. This chain is Mitochondrial inner membrane protein Mpv17, found in Homo sapiens (Human).